The chain runs to 351 residues: uncharacterized protein (351 aa).

One can recognise an HTH lacI-type domain in the interval 14–69 (PRLADIAAQAQVSEATASRVLNGRPASRXSTRQRVLAALDLLGYERPTRLRRRSAG). Positions 16–35 (LADIAAQAQVSEATASRVLN) form a DNA-binding region, H-T-H motif.

Its function is as follows. Putative sugar-binding regulatory protein for the alpha-amylase gene. This is an uncharacterized protein from Streptomyces limosus (Streptomyces albidoflavus).